A 171-amino-acid chain; its full sequence is UPF0316 protein EAT1b_0871 (171 aa).

Transmembrane regions (helical) follow at residues 4–24 (ILLI…RTIM), 32–52 (IAGL…GIVF), and 57–77 (TVGM…GGFV).

The protein belongs to the UPF0316 family.

Its subcellular location is the cell membrane. In Exiguobacterium sp. (strain ATCC BAA-1283 / AT1b), this protein is UPF0316 protein EAT1b_0871.